We begin with the raw amino-acid sequence, 102 residues long: Putative pterin-4-alpha-carbinolamine dehydratase (102 aa).

Belongs to the pterin-4-alpha-carbinolamine dehydratase family.

It carries out the reaction (4aS,6R)-4a-hydroxy-L-erythro-5,6,7,8-tetrahydrobiopterin = (6R)-L-erythro-6,7-dihydrobiopterin + H2O. The protein is Putative pterin-4-alpha-carbinolamine dehydratase of Burkholderia vietnamiensis (strain G4 / LMG 22486) (Burkholderia cepacia (strain R1808)).